The chain runs to 263 residues: 3'-5' ssDNA/RNA exonuclease TatD (263 aa).

The a divalent metal cation site is built by glutamate 91, histidine 127, and histidine 152.

It belongs to the metallo-dependent hydrolases superfamily. TatD-type hydrolase family. TatD subfamily. As to quaternary structure, monomer. Mg(2+) is required as a cofactor.

It is found in the cytoplasm. Its function is as follows. 3'-5' exonuclease that prefers single-stranded DNA and RNA. May play a role in the H(2)O(2)-induced DNA damage repair. The protein is 3'-5' ssDNA/RNA exonuclease TatD of Citrobacter rodentium (strain ICC168) (Citrobacter freundii biotype 4280).